A 320-amino-acid chain; its full sequence is Endolytic peptidoglycan transglycosylase RlpA (320 aa).

Belongs to the RlpA family.

Functionally, lytic transglycosylase with a strong preference for naked glycan strands that lack stem peptides. The sequence is that of Endolytic peptidoglycan transglycosylase RlpA from Rickettsia prowazekii (strain Madrid E).